A 715-amino-acid chain; its full sequence is Polyribonucleotide nucleotidyltransferase (715 aa).

Mg(2+) is bound by residues aspartate 488 and aspartate 494. The 60-residue stretch at 555–614 (PRIEVMHIPTDKIRDVIGSGGKVIREIVEKTGAKINIEDDGTVKIASSNAKEIEAAKKWI) folds into the KH domain. The region spanning 624–692 (GEIYEGTVVK…ERGKVRLSMK (69 aa)) is the S1 motif domain.

This sequence belongs to the polyribonucleotide nucleotidyltransferase family. It depends on Mg(2+) as a cofactor.

It is found in the cytoplasm. The catalysed reaction is RNA(n+1) + phosphate = RNA(n) + a ribonucleoside 5'-diphosphate. In terms of biological role, involved in mRNA degradation. Catalyzes the phosphorolysis of single-stranded polyribonucleotides processively in the 3'- to 5'-direction. This is Polyribonucleotide nucleotidyltransferase from Mesorhizobium japonicum (strain LMG 29417 / CECT 9101 / MAFF 303099) (Mesorhizobium loti (strain MAFF 303099)).